A 179-amino-acid polypeptide reads, in one-letter code: Transcription factor 21 (179 aa).

The segment at 20 to 86 (CDGIKLDPNK…KQVQRNAANA (67 aa)) is disordered. A compositionally biased stretch (polar residues) spans 34 to 46 (SNDSNEESSTCDN). Over residues 50-64 (KKGRGTSGKRRKASS) the composition is skewed to basic residues. Over residues 70 to 80 (GTINQEGKQVQ) the composition is skewed to polar residues. The bHLH domain occupies 79-131 (VQRNAANARERARMRVLSKAFSRLKTTLPWVPPDTKLSKLDTLRLASSYIAHL).

In terms of assembly, efficient DNA binding requires dimerization with another bHLH protein. As to expression, at the start of neurulation (stage 13), expressed in the pronephros. At tailbud stage (stage 25-28), expression is high in the anterior-most branchial arch and pronephric glomus. At stage 40, staining persists in the glomus and in the epicardium region of the heart, and at stage 42, expression is higher in the glomus than in the kidney tubule or duct. In adults, expression is highest in the rectum and the spleen, with significant expression in the duodenum, heart, kidney, lungs, pancreas, skin, liver and muscle.

Its subcellular location is the nucleus. Involved in epithelial-mesenchymal interactions in kidney and lung morphogenesis that include epithelial differentiation and branching morphogenesis. The sequence is that of Transcription factor 21 (tcf21) from Xenopus laevis (African clawed frog).